A 589-amino-acid polypeptide reads, in one-letter code: Protein FAM117B (589 aa).

The disordered stretch occupies residues 1–310; it reads MSQRVRRNGS…RDKERQSPFH (310 aa). Serine 10 carries the post-translational modification Phosphoserine. Gly residues predominate over residues 16-29; the sequence is SLGGGAVATAGGPG. Residues 45–56 are compositionally biased toward low complexity; sequence QQQQQQHGSPTR. A compositionally biased stretch (gly residues) spans 57–85; it reads SGGGGGGNNNGGCCGGASGPAGGGGGGGP. Serine 106 is subject to Phosphoserine. A compositionally biased stretch (low complexity) spans 108 to 136; it reads TVATQTGASATSTRGTSPTRSAAPGARGS. Over residues 137–146 the composition is skewed to pro residues; sequence PPRPPPPPPL. 2 stretches are compositionally biased toward low complexity: residues 147–158 and 207–220; these read LGTVSSPSSSPT and PSSS…RTSS. A phosphoserine mark is found at serine 210, serine 219, serine 220, and serine 273. The segment covering 292-302 has biased composition (basic residues); sequence RSKHSSRHHRD. Serine 345 and serine 391 each carry phosphoserine. Disordered regions lie at residues 370–464 and 556–589; these read QDIP…NNSY and STNT…EAEG. A compositionally biased stretch (polar residues) spans 384–397; it reads QRSSSTRSIDTQTP. Over residues 404 to 417 the composition is skewed to low complexity; sequence SNNSSRSQSVSPTS. Residues serine 449 and serine 457 each carry the phosphoserine modification.

This chain is Protein FAM117B (FAM117B), found in Homo sapiens (Human).